A 148-amino-acid polypeptide reads, in one-letter code: CDC25-like phosphatase YCH1 (148 aa).

M1 carries the N-acetylmethionine modification. The region spanning 29–137 (LREPFQVVDV…WQSVYGDDES (109 aa)) is the Rhodanese domain.

The protein belongs to the MPI phosphatase family.

Its subcellular location is the cytoplasm. It localises to the nucleus. Protein phosphatase. This is CDC25-like phosphatase YCH1 (YCH1) from Saccharomyces cerevisiae (strain ATCC 204508 / S288c) (Baker's yeast).